The chain runs to 266 residues: Phosphatidylglycerol--prolipoprotein diacylglyceryl transferase (266 aa).

A run of 7 helical transmembrane segments spans residues 10 to 30, 56 to 76, 92 to 112, 120 to 140, 172 to 192, 200 to 220, and 234 to 254; these read VAIA…LVGI, LVFW…VFFY, WEGG…TWWF, FFEL…AGRI, PSQL…LWFY, MAVS…VEFV, and WLTM…GLIA. A 1,2-diacyl-sn-glycero-3-phospho-(1'-sn-glycerol) is bound at residue R139.

Belongs to the Lgt family.

The protein localises to the cell inner membrane. The catalysed reaction is L-cysteinyl-[prolipoprotein] + a 1,2-diacyl-sn-glycero-3-phospho-(1'-sn-glycerol) = an S-1,2-diacyl-sn-glyceryl-L-cysteinyl-[prolipoprotein] + sn-glycerol 1-phosphate + H(+). Its pathway is protein modification; lipoprotein biosynthesis (diacylglyceryl transfer). Its function is as follows. Catalyzes the transfer of the diacylglyceryl group from phosphatidylglycerol to the sulfhydryl group of the N-terminal cysteine of a prolipoprotein, the first step in the formation of mature lipoproteins. This Ectopseudomonas mendocina (strain ymp) (Pseudomonas mendocina) protein is Phosphatidylglycerol--prolipoprotein diacylglyceryl transferase.